A 420-amino-acid chain; its full sequence is Tyrosine--tRNA ligase (420 aa).

Y36 lines the L-tyrosine pocket. Positions P41–H50 match the 'HIGH' region motif. L-tyrosine is bound by residues Y170 and Q174. The 'KMSKS' region motif lies at K231–S235. K234 contacts ATP. The 68-residue stretch at T353–Q420 folds into the S4 RNA-binding domain.

The protein belongs to the class-I aminoacyl-tRNA synthetase family. TyrS type 1 subfamily. Homodimer.

It localises to the cytoplasm. It carries out the reaction tRNA(Tyr) + L-tyrosine + ATP = L-tyrosyl-tRNA(Tyr) + AMP + diphosphate + H(+). Functionally, catalyzes the attachment of tyrosine to tRNA(Tyr) in a two-step reaction: tyrosine is first activated by ATP to form Tyr-AMP and then transferred to the acceptor end of tRNA(Tyr). This is Tyrosine--tRNA ligase from Staphylococcus aureus (strain bovine RF122 / ET3-1).